Consider the following 87-residue polypeptide: Small ribosomal subunit protein uS17 (87 aa).

Belongs to the universal ribosomal protein uS17 family. Part of the 30S ribosomal subunit.

Its function is as follows. One of the primary rRNA binding proteins, it binds specifically to the 5'-end of 16S ribosomal RNA. This chain is Small ribosomal subunit protein uS17, found in Thioalkalivibrio sulfidiphilus (strain HL-EbGR7).